A 622-amino-acid polypeptide reads, in one-letter code: Neuronal acetylcholine receptor subunit alpha-4 (622 aa).

An N-terminal signal peptide occupies residues 1–23; sequence MGFLVSKGNLLLLLCASIFPAFG. Topologically, residues 24–237 are extracellular; it reads HVETRAHAEE…ITYSFIIRRL (214 aa). N-linked (GlcNAc...) asparagine glycosylation occurs at Asn52. Val71 and Glu73 together coordinate Ca(2+). Asn102 is a glycosylation site (N-linked (GlcNAc...) asparagine). Disulfide bonds link Cys156–Cys170 and Cys220–Cys221. Residues 238 to 262 traverse the membrane as a helical segment; it reads PLFYTINLIIPCLLISCLTVLVFYL. The S-palmitoyl cysteine moiety is linked to residue Cys266. A run of 2 helical transmembrane segments spans residues 270–288 and 304–325; these read ITLC…LLIT and YLLF…VLNV. At 326-595 the chain is on the cytoplasmic side; the sequence is HHRSPRTHTM…WKYVAMVIDR (270 aa). 2 disordered regions span residues 380–477 and 497–516; these read WSET…TEEG and QTNG…LNEE. The segment covering 390–407 has biased composition (low complexity); the sequence is TTSSSPSPQSNEPSPTSS. Composition is skewed to polar residues over residues 450-472 and 497-508; these read SDTQ…YSPN and QTNGHSSASPAS. The chain crosses the membrane as a helical span at residues 596–614; it reads IFLWMFIIVCLLGTVGLFL.

Belongs to the ligand-gated ion channel (TC 1.A.9) family. Acetylcholine receptor (TC 1.A.9.1) subfamily. Alpha-4/CHRNA4 sub-subfamily. As to quaternary structure, neuronal AChR is composed of two different types of subunits: alpha and beta. CHRNA4 forms heteropentameric neuronal acetylcholine receptors with CHRNB2 and CHRNB4, as well as CHRNA5 and CHRNB3 as accesory subunits. Found in two major stoichiometric forms, LS (low agonist sensitivity): (CHRNA4)3:(CHRNB2)2 and HS (high agonist sensitivity): (CHRNA4)2:(CHRNB2)3, the two stoichiometric forms differ in their unitary conductance, calcium permeability, ACh sensitivity and potentiation by divalent cation. Cells produce predominantly an (CHRNA4)3:(CHRNB2)2 nAChR. The (CHRNA4)2:(CHRNB2)3 expression is selectively up-regulated by nicotine and has lower single channel conductance and calcium permeability. In the striatum, also forms CHRNA4:CHRNA6:CHRNB2 complexes. Also found in the stoichiometric form: (CHRNA4:CHRNB2)2:CHRNB3.

It is found in the synaptic cell membrane. It localises to the cell membrane. The catalysed reaction is Ca(2+)(in) = Ca(2+)(out). It carries out the reaction K(+)(in) = K(+)(out). The enzyme catalyses Na(+)(in) = Na(+)(out). With respect to regulation, activated by a myriad of ligands such as acetylcholine, cytisine, nicotine, choline and epibatidine. Channel potentiation by calcium is stoichiometry-selective, CHRNA4:CHRNB2 nACh receptor is achieved by calcium association with topographically distinct sites framed by anionic residues within the CHRNA4 subunit and between the CHRNA4 and CHRNB2 subunits. nAChR activity is inhibited by the antagonist alpha-conotoxins BuIA, PnIA, GID and MII, small disulfide-constrained peptides from cone snails. Component of neuronal acetylcholine receptors (nAChRs) that function as pentameric, ligand-gated cation channels with high calcium permeability among other activities. nAChRs are excitatory neurotrasnmitter receptors formed by a collection of nAChR subunits known to mediate synaptic transmission in the nervous system and the neuromuscular junction. Each nAchR subunit confers differential attributes to channel properties, including activation, deactivation and desensitization kinetics, pH sensitivity, cation permeability, and binding to allosteric modulators. CHRNA4 forms heteropentameric neuronal acetylcholine receptors with CHRNB2 and CHRNB4, as well as CHRNA5 and CHRNB3 as accesory subunits. Is the most abundant nAChR subtype expressed in the central nervous system. Found in two major stoichiometric forms,(CHRNA4)3:(CHRNB2)2 and (CHRNA4)2:(CHRNB2)3, the two stoichiometric forms differ in their unitary conductance, calcium permeability, ACh sensitivity and potentiation by divalent cation. Involved in the modulation of calcium-dependent signaling pathways, influences the release of neurotransmitters, including dopamine, glutamate and GABA. The polypeptide is Neuronal acetylcholine receptor subunit alpha-4 (CHRNA4) (Gallus gallus (Chicken)).